We begin with the raw amino-acid sequence, 339 residues long: D-erythrose-4-phosphate dehydrogenase (339 aa).

NAD(+) contacts are provided by residues 12-13 and R81; that span reads RI. Substrate-binding positions include 154–156, R200, 213–214, and R236; these read SCT and TK. C155 acts as the Nucleophile in catalysis. Residue N318 coordinates NAD(+).

It belongs to the glyceraldehyde-3-phosphate dehydrogenase family. Epd subfamily. Homotetramer.

Its subcellular location is the cytoplasm. It carries out the reaction D-erythrose 4-phosphate + NAD(+) + H2O = 4-phospho-D-erythronate + NADH + 2 H(+). It functions in the pathway cofactor biosynthesis; pyridoxine 5'-phosphate biosynthesis; pyridoxine 5'-phosphate from D-erythrose 4-phosphate: step 1/5. In terms of biological role, catalyzes the NAD-dependent conversion of D-erythrose 4-phosphate to 4-phosphoerythronate. This chain is D-erythrose-4-phosphate dehydrogenase, found in Shigella dysenteriae serotype 1 (strain Sd197).